Here is a 212-residue protein sequence, read N- to C-terminus: Ras-related protein Rab-15 (212 aa).

Residues serine 17, glycine 18, valine 19, glycine 20, lysine 21, threonine 22, cysteine 23, serine 35, serine 39, and threonine 40 each contribute to the GTP site. Threonine 22 lines the Mg(2+) pocket. 2 short sequence motifs (switch) span residues 31-45 (NEFHSSHISTIGVDF) and 63-80 (DTAGQERYQTITKQYYRR). 2 residues coordinate Mg(2+): threonine 40 and aspartate 63. Positions 66, 121, 122, 124, 151, and 152 each coordinate GTP. Residues cysteine 210 and cysteine 212 are each lipidated (S-geranylgeranyl cysteine). Cysteine 212 bears the Cysteine methyl ester mark.

Belongs to the small GTPase superfamily. Rab family. In terms of assembly, the GTP bound form of RAB15 interacts with REP15. Interacts (GTP-bound form) with MICAL1, MICAL3, MICALCL, EHBP1 and EHBP1L1. Mg(2+) is required as a cofactor. Expressed predominantly in neural tissues.

The protein localises to the cell membrane. It carries out the reaction GTP + H2O = GDP + phosphate + H(+). Its activity is regulated as follows. Regulated by guanine nucleotide exchange factors (GEFs) which promote the exchange of bound GDP for free GTP. Regulated by GTPase activating proteins (GAPs) which increase the GTP hydrolysis activity. Inhibited by GDP dissociation inhibitors (GDIs). The small GTPases Rab are key regulators of intracellular membrane trafficking, from the formation of transport vesicles to their fusion with membranes. Rabs cycle between an inactive GDP-bound form and an active GTP-bound form that is able to recruit to membranes different sets of downstream effectors directly responsible for vesicle formation, movement, tethering and fusion. RAB15 may act in concert with RAB3A in regulating aspects of synaptic vesicle membrane flow within the nerve terminal. The protein is Ras-related protein Rab-15 of Rattus norvegicus (Rat).